The following is a 382-amino-acid chain: Adaptive-response sensory kinase SasA (382 aa).

Residues 160–382 form the Histidine kinase domain; it reads MLAHDLRSPL…CFHFTLPVYR (223 aa). The residue at position 163 (His163) is a Phosphohistidine; by autocatalysis.

In terms of assembly, homooligomerizes. Interacts with KaiC. Participates in the KaiABC clock complex, whose core is composed of a KaiC homohexamer, 6 KaiB and up to 6 KaiA dimers. SasA and KaiB(fs) compete to bind to KaiC.

The enzyme catalyses ATP + protein L-histidine = ADP + protein N-phospho-L-histidine.. Member of the two-component regulatory system SasA/RpaA involved in genome-wide circadian gene expression. One of several clock output pathways. Participates in the Kai clock protein complex, the main circadian regulator in cyanobacteria, via its interaction with KaiC. KaiC enhances the autophosphorylation activity of SasA, which then transfers its phosphate group to RpaA to activate it. In addition to its output function, recruits fold-shifted KaiB (KaiB(fs)) to KaiC to cooperatively form the KaiB(6):KaiC(6) complex (independent of SasA kinase activity). Required for robustness of the circadian rhythm of gene expression and is involved in clock output, also required for adaptation to light/dark cycles. The sequence is that of Adaptive-response sensory kinase SasA from Crocosphaera subtropica (strain ATCC 51142 / BH68) (Cyanothece sp. (strain ATCC 51142)).